Consider the following 321-residue polypeptide: Ribose-phosphate pyrophosphokinase (321 aa).

ATP-binding positions include 44 to 46 and 103 to 104; these read DGE and RQ. Residues His137 and Asp179 each coordinate Mg(2+). Lys202 is an active-site residue. Residues Arg204, Asp228, and 232–236 each bind D-ribose 5-phosphate; that span reads DTAGT.

This sequence belongs to the ribose-phosphate pyrophosphokinase family. Class I subfamily. As to quaternary structure, homohexamer. Mg(2+) is required as a cofactor.

The protein localises to the cytoplasm. The enzyme catalyses D-ribose 5-phosphate + ATP = 5-phospho-alpha-D-ribose 1-diphosphate + AMP + H(+). It functions in the pathway metabolic intermediate biosynthesis; 5-phospho-alpha-D-ribose 1-diphosphate biosynthesis; 5-phospho-alpha-D-ribose 1-diphosphate from D-ribose 5-phosphate (route I): step 1/1. Its function is as follows. Involved in the biosynthesis of the central metabolite phospho-alpha-D-ribosyl-1-pyrophosphate (PRPP) via the transfer of pyrophosphoryl group from ATP to 1-hydroxyl of ribose-5-phosphate (Rib-5-P). The protein is Ribose-phosphate pyrophosphokinase of Staphylococcus aureus (strain COL).